A 178-amino-acid chain; its full sequence is Caveolin-1 (178 aa).

Serine 2 bears the N-acetylserine mark. Serine 2 carries the phosphoserine modification. The required for homooligomerization stretch occupies residues 2–94 (SGGKYVDSEG…WKASFTTFTV (93 aa)). Residues 2–104 (SGGKYVDSEG…TKYWFYRLLS (103 aa)) are Cytoplasmic-facing. Lysine 5 is modified (N6-acetyllysine; alternate). Residue lysine 5 forms a Glycyl lysine isopeptide (Lys-Gly) (interchain with G-Cter in ubiquitin); alternate linkage. At tyrosine 6 the chain carries Phosphotyrosine. Serine 9 bears the Phosphoserine mark. Tyrosine 14 carries the post-translational modification Phosphotyrosine; by ABL1. At tyrosine 25 the chain carries Phosphotyrosine. Residues lysine 26, lysine 30, lysine 39, lysine 47, and lysine 57 each participate in a glycyl lysine isopeptide (Lys-Gly) (interchain with G-Cter in ubiquitin) cross-link. Residues 82-94 (DGIWKASFTTFTV) form an interaction with CAVIN3 region. An intramembrane region (helical) is located at residues 105–125 (SLVGIPVALIWGIYFAILSFL). The Cytoplasmic segment spans residues 126–178 (YIWAVVPCIKSFLIKIQCISRIYSICIHTFCDPLYEAIGKIFSNIRISMQKEI). Residues 131 to 142 (VPCIKSFLIKIQ) are interacts with SPRY1, SPRY2, SPRY3 and SPRY4. S-palmitoyl cysteine attachment occurs at residues cysteine 133, cysteine 143, and cysteine 156. Residues 149–160 (SICIHTFCDPLY) are interacts with SPRY1, SPRY2, and SPRY4. The interacts with SPRY1, SPRY2, SPRY3 and SPRY4 stretch occupies residues 167 to 178 (FSNIRISMQKEI).

It belongs to the caveolin family. Homooligomer. Interacts with GLIPR2. Interacts with NOSTRIN. Interacts with SNAP25 and STX1A. Interacts (via the N-terminus) with DPP4; the interaction is direct. Interacts with CTNNB1, CDH1 and JUP. Interacts with PACSIN2; this interaction induces membrane tubulation. Interacts with SLC7A9. Interacts with BMX and BTK. Interacts with TGFBR1. Interacts with CAVIN3 (via leucine-zipper domain) in a cholesterol-sensitive manner. Interacts with CAVIN1. Interacts with EHD2 in a cholesterol-dependent manner. Forms a ternary complex with UBXN6 and VCP; mediates CAV1 targeting to lysosomes for degradation. Interacts with ABCG1; this interaction regulates ABCG1-mediated cholesterol efflux. Interacts with NEU3; this interaction enhances NEU3 sialidase activity within caveola. Interacts (via C-terminus) with SPRY1, SPRY2 (via C-terminus), SPRY3, and SPRY4. Interacts with IGFBP5; this interaction allows trafficking of IGFBP5 from the plasma membrane to the nucleus. In terms of processing, phosphorylated at Tyr-14 by ABL1 in response to oxidative stress. Ubiquitinated. Undergo monoubiquitination and multi- and/or polyubiquitination. Monoubiquitination of N-terminal lysines promotes integration in a ternary complex with UBXN6 and VCP which promotes oligomeric CAV1 targeting to lysosomes for degradation. Ubiquitinated by ZNRF1; leading to degradation and modulation of the TLR4-mediated immune response.

The protein localises to the golgi apparatus membrane. Its subcellular location is the cell membrane. It is found in the membrane. It localises to the caveola. The protein resides in the membrane raft. Its function is as follows. May act as a scaffolding protein within caveolar membranes. Forms a stable heterooligomeric complex with CAV2 that targets to lipid rafts and drives caveolae formation. Mediates the recruitment of CAVIN proteins (CAVIN1/2/3/4) to the caveolae. Interacts directly with G-protein alpha subunits and can functionally regulate their activity. Involved in the costimulatory signal essential for T-cell receptor (TCR)-mediated T-cell activation. Its binding to DPP4 induces T-cell proliferation and NF-kappa-B activation in a T-cell receptor/CD3-dependent manner. Recruits CTNNB1 to caveolar membranes and may regulate CTNNB1-mediated signaling through the Wnt pathway. Negatively regulates TGFB1-mediated activation of SMAD2/3 by mediating the internalization of TGFBR1 from membrane rafts leading to its subsequent degradation. Binds 20(S)-hydroxycholesterol (20(S)-OHC). This chain is Caveolin-1 (CAV1), found in Atelerix albiventris (Middle-African hedgehog).